The sequence spans 184 residues: ATP synthase subunit delta (184 aa).

Belongs to the ATPase delta chain family. F-type ATPases have 2 components, F(1) - the catalytic core - and F(0) - the membrane proton channel. F(1) has five subunits: alpha(3), beta(3), gamma(1), delta(1), epsilon(1). F(0) has three main subunits: a(1), b(2) and c(10-14). The alpha and beta chains form an alternating ring which encloses part of the gamma chain. F(1) is attached to F(0) by a central stalk formed by the gamma and epsilon chains, while a peripheral stalk is formed by the delta and b chains.

The protein resides in the cell inner membrane. Its function is as follows. F(1)F(0) ATP synthase produces ATP from ADP in the presence of a proton or sodium gradient. F-type ATPases consist of two structural domains, F(1) containing the extramembraneous catalytic core and F(0) containing the membrane proton channel, linked together by a central stalk and a peripheral stalk. During catalysis, ATP synthesis in the catalytic domain of F(1) is coupled via a rotary mechanism of the central stalk subunits to proton translocation. This protein is part of the stalk that links CF(0) to CF(1). It either transmits conformational changes from CF(0) to CF(1) or is implicated in proton conduction. The protein is ATP synthase subunit delta of Phenylobacterium zucineum (strain HLK1).